The following is a 168-amino-acid chain: Ecotin (168 aa).

An N-terminal signal peptide occupies residues 1–21 (MKRLSIAITSLLMAASASTIA). Residues cysteine 76 and cysteine 113 are joined by a disulfide bond.

The protein belongs to the protease inhibitor I11 (ecotin) family. Homodimer.

It localises to the periplasm. General inhibitor of pancreatic serine proteases: inhibits chymotrypsin, trypsin, elastases, factor X, kallikrein as well as a variety of other proteases. The polypeptide is Ecotin (Yersinia enterocolitica serotype O:8 / biotype 1B (strain NCTC 13174 / 8081)).